A 204-amino-acid chain; its full sequence is Cytochrome bo(3) ubiquinol oxidase subunit 3 (204 aa).

Residues 1–31 lie on the Cytoplasmic side of the membrane; sequence MATDTLTHATAHAHEHGHHDAGGTKIFGFWI. A helical membrane pass occupies residues 32–50; it reads YLMSDCILFSILFATYAVL. Over 51-66 the chain is Periplasmic; that stretch reads VNGTAGGPTGKDIFEL. A helical membrane pass occupies residues 67–85; it reads PFVLVETFLLLFSSITYGM. Residues 86–101 lie on the Cytoplasmic side of the membrane; sequence AAIAMYKNNKSQVISW. A helical membrane pass occupies residues 102-120; sequence LALTWLFGAGFIGMEIYEF. Over 121–142 the chain is Periplasmic; that stretch reads HHLIVNGMGPDRSGFLSAFFAL. Residues 143–161 traverse the membrane as a helical segment; the sequence is VGTHGLHVTSGLIWMAVLM. The Cytoplasmic segment spans residues 162-184; sequence VQIARRGLTSTNRTRIMCLSLFW. Residues 185–203 form a helical membrane-spanning segment; the sequence is HFLDVVWICVFTVVYLMGA. Residue Met204 is a topological domain, periplasmic.

It belongs to the cytochrome c oxidase subunit 3 family. In terms of assembly, heterooctamer of two A chains, two B chains, two C chains and two D chains.

The protein localises to the cell inner membrane. Its function is as follows. Cytochrome bo(3) ubiquinol terminal oxidase is the component of the aerobic respiratory chain of E.coli that predominates when cells are grown at high aeration. Has proton pump activity across the membrane in addition to electron transfer, pumping 2 protons/electron. The polypeptide is Cytochrome bo(3) ubiquinol oxidase subunit 3 (cyoC) (Escherichia coli O6:H1 (strain CFT073 / ATCC 700928 / UPEC)).